Consider the following 602-residue polypeptide: 4-hydroxy-3-methylbut-2-en-1-yl diphosphate synthase (flavodoxin) (602 aa).

Residues Cys508, Cys511, Cys543, and Glu550 each contribute to the [4Fe-4S] cluster site.

Belongs to the IspG family. The cofactor is [4Fe-4S] cluster.

The catalysed reaction is (2E)-4-hydroxy-3-methylbut-2-enyl diphosphate + oxidized [flavodoxin] + H2O + 2 H(+) = 2-C-methyl-D-erythritol 2,4-cyclic diphosphate + reduced [flavodoxin]. It participates in isoprenoid biosynthesis; isopentenyl diphosphate biosynthesis via DXP pathway; isopentenyl diphosphate from 1-deoxy-D-xylulose 5-phosphate: step 5/6. Converts 2C-methyl-D-erythritol 2,4-cyclodiphosphate (ME-2,4cPP) into 1-hydroxy-2-methyl-2-(E)-butenyl 4-diphosphate. The protein is 4-hydroxy-3-methylbut-2-en-1-yl diphosphate synthase (flavodoxin) of Chlamydia trachomatis serovar L2b (strain UCH-1/proctitis).